Reading from the N-terminus, the 404-residue chain is Protrudin (404 aa).

Residues 1–25 are disordered; that stretch reads MQSSDRDLSGPEASPSVMPEVLSEC. Residues 1–63 lie on the Cytoplasmic side of the membrane; sequence MQSSDRDLSG…LKDAGDGVRY (63 aa). The tract at residues 1–92 is sufficient for homooligomerization; sequence MQSSDRDLSG…LFLTLNEGAW (92 aa). The interval 1 to 205 is sufficient for localization to endoplasmic reticulum tubular network and for interactions with REEP1, REEP5, ATL1, ATL2, ATL3 and SPAST; sequence MQSSDRDLSG…LYLLPLCWVL (205 aa). Positions 51 to 64 are necessary for interaction with RAB11A and function in neurite outgrowth; that stretch reads LEPLKDAGDGVRYL. Residues 64–85 traverse the membrane as a helical segment; that stretch reads LLRWQMPLCSLLTCLGLNILFL. Residues 86–90 are Lumenal-facing; sequence TLNEG. Residues 91–109 traverse the membrane as a helical segment; the sequence is AWYSVGALIISVPALLGYL. The Cytoplasmic portion of the chain corresponds to 110-187; that stretch reads QEVCRAQLPE…NPVVSSQFYG (78 aa). The helical intramembrane region spans 188–208; that stretch reads ALLGMVCMLYLLPLCWVLALL. Residues 209-404 are Cytoplasmic-facing; the sequence is NSTLFLGNGE…CASCNQTLSK (196 aa). The tract at residues 259-299 is disordered; that stretch reads DSTPAPTPTEDLTPGSVEEAEEAEPDEEFKDAIEEDDEGTP. Residues 271–354 form a necessary for interaction with KIF5A region; sequence TPGSVEEAEE…GCAATFSVLK (84 aa). The span at 276 to 299 shows a compositional bias: acidic residues; it reads EEAEEAEPDEEFKDAIEEDDEGTP. Residues 286–292 form a necessary for interaction with VAPA region; it reads EFKDAIE. An FYVE-type zinc finger spans residues 337–403; sequence TNNFGNCAGC…VCASCNQTLS (67 aa). Zn(2+) is bound by residues cysteine 343, cysteine 346, cysteine 359, cysteine 362, cysteine 367, cysteine 370, cysteine 395, and cysteine 398.

As to quaternary structure, can form homooligomers (monomers, dimers and tetramers). Interacts with FKBP8; may negatively regulate ZFYVE27 phosphorylation. Interacts with VAPA (via MSP domain); may regulate ZFYVE27 retention in the endoplasmic reticulum and its function in cell projections formation. Interacts with VAPB (via MSP domain). Interacts with RAB11A (GDP-bound form); regulates RAB11A. Interacts with RAB11B (GDP-bound form), REEP1, REEP5, ATL1, ATL2, ATL3, SPAST, SURF4, KIF5A, KIF5B, KIF5C and RTN3. Post-translationally, phosphorylated. Phosphorylation is induced by NGF through the MAPK/ERK pathway and modulates interaction with RAB11A.

The protein localises to the recycling endosome membrane. It localises to the endoplasmic reticulum membrane. The protein resides in the cell projection. It is found in the growth cone membrane. Functionally, key regulator of RAB11-dependent vesicular trafficking during neurite extension through polarized membrane transport. Promotes axonal elongation and contributes to the establishment of neuronal cell polarity. Involved in nerve growth factor-induced neurite formation in VAPA-dependent manner. Contributes to both the formation and stabilization of the tubular ER network. Involved in ER morphogenesis by regulating the sheet-to-tubule balance and possibly the density of tubule interconnections. Acts as an adapter protein that facilitates the interaction of KIF5A with VAPA, VAPB, SURF4, RAB11A, RAB11B and RTN3 and the ZFYVE27-KIF5A complex contributes to the transport of these proteins in neurons. Can induce formation of neurite-like membrane protrusions in non-neuronal cells in a KIF5A/B-dependent manner. The chain is Protrudin (Zfyve27) from Rattus norvegicus (Rat).